The primary structure comprises 363 residues: Phosphoserine aminotransferase (363 aa).

Residue Arg-41 coordinates L-glutamate. Residues 75–76, Trp-100, Thr-155, Asp-175, and Gln-198 contribute to the pyridoxal 5'-phosphate site; that span reads AS. The residue at position 199 (Lys-199) is an N6-(pyridoxal phosphate)lysine. 239-240 contributes to the pyridoxal 5'-phosphate binding site; that stretch reads NT.

This sequence belongs to the class-V pyridoxal-phosphate-dependent aminotransferase family. SerC subfamily. As to quaternary structure, homodimer. It depends on pyridoxal 5'-phosphate as a cofactor.

The protein localises to the cytoplasm. The catalysed reaction is O-phospho-L-serine + 2-oxoglutarate = 3-phosphooxypyruvate + L-glutamate. It carries out the reaction 4-(phosphooxy)-L-threonine + 2-oxoglutarate = (R)-3-hydroxy-2-oxo-4-phosphooxybutanoate + L-glutamate. It functions in the pathway amino-acid biosynthesis; L-serine biosynthesis; L-serine from 3-phospho-D-glycerate: step 2/3. Its function is as follows. Catalyzes the reversible conversion of 3-phosphohydroxypyruvate to phosphoserine and of 3-hydroxy-2-oxo-4-phosphonooxybutanoate to phosphohydroxythreonine. The chain is Phosphoserine aminotransferase from Streptococcus suis (strain 98HAH33).